The following is a 355-amino-acid chain: Peptide chain release factor 1 (355 aa).

Gln233 bears the N5-methylglutamine mark.

Belongs to the prokaryotic/mitochondrial release factor family. Methylated by PrmC. Methylation increases the termination efficiency of RF1.

It is found in the cytoplasm. Functionally, peptide chain release factor 1 directs the termination of translation in response to the peptide chain termination codons UAG and UAA. The polypeptide is Peptide chain release factor 1 (Syntrophomonas wolfei subsp. wolfei (strain DSM 2245B / Goettingen)).